Reading from the N-terminus, the 367-residue chain is tRNA-specific 2-thiouridylase MnmA (367 aa).

ATP-binding positions include 9-16 (LMSGGVDS) and F35. C107 acts as the Nucleophile in catalysis. C107 and C205 form a disulfide bridge. G131 contacts ATP. An interaction with tRNA region spans residues 155–157 (KDQ). C205 serves as the catalytic Cysteine persulfide intermediate.

This sequence belongs to the MnmA/TRMU family.

It localises to the cytoplasm. The catalysed reaction is S-sulfanyl-L-cysteinyl-[protein] + uridine(34) in tRNA + AH2 + ATP = 2-thiouridine(34) in tRNA + L-cysteinyl-[protein] + A + AMP + diphosphate + H(+). Catalyzes the 2-thiolation of uridine at the wobble position (U34) of tRNA, leading to the formation of s(2)U34. The protein is tRNA-specific 2-thiouridylase MnmA of Petrotoga mobilis (strain DSM 10674 / SJ95).